The chain runs to 231 residues: 5'-methylthioadenosine/S-adenosylhomocysteine nucleosidase (231 aa).

Glutamate 12 functions as the Proton acceptor in the catalytic mechanism. Residues glycine 78, methionine 153, and 174–175 (ME) each bind substrate. The Proton donor role is filled by aspartate 198.

The protein belongs to the PNP/UDP phosphorylase family. MtnN subfamily.

The catalysed reaction is S-adenosyl-L-homocysteine + H2O = S-(5-deoxy-D-ribos-5-yl)-L-homocysteine + adenine. The enzyme catalyses S-methyl-5'-thioadenosine + H2O = 5-(methylsulfanyl)-D-ribose + adenine. It carries out the reaction 5'-deoxyadenosine + H2O = 5-deoxy-D-ribose + adenine. It participates in amino-acid biosynthesis; L-methionine biosynthesis via salvage pathway; S-methyl-5-thio-alpha-D-ribose 1-phosphate from S-methyl-5'-thioadenosine (hydrolase route): step 1/2. In terms of biological role, catalyzes the irreversible cleavage of the glycosidic bond in both 5'-methylthioadenosine (MTA) and S-adenosylhomocysteine (SAH/AdoHcy) to adenine and the corresponding thioribose, 5'-methylthioribose and S-ribosylhomocysteine, respectively. Also cleaves 5'-deoxyadenosine, a toxic by-product of radical S-adenosylmethionine (SAM) enzymes, into 5-deoxyribose and adenine. The polypeptide is 5'-methylthioadenosine/S-adenosylhomocysteine nucleosidase (Bacillus cereus (strain G9842)).